Consider the following 73-residue polypeptide: Beta-defensin 39 (73 aa).

Residues 1–23 (MKISCFLLLVLSLSCFQINSVSG) form the signal peptide. Cystine bridges form between Cys29–Cys58, Cys36–Cys51, and Cys41–Cys59.

Belongs to the beta-defensin family.

Its subcellular location is the secreted. Its function is as follows. Has antibacterial activity. The chain is Beta-defensin 39 (Defb39) from Rattus norvegicus (Rat).